The chain runs to 262 residues: Sepiapterin reductase (262 aa).

Position 1 is an N-acetylmethionine (Met-1). Residues 15-21 (GASRGFG) and 43-44 (RS) each bind NADP(+). Ser-46 bears the Phosphoserine mark. 70–71 (DL) lines the NADP(+) pocket. Residues 158–159 (SL) and Tyr-171 each bind substrate. Lys-175 lines the NADP(+) pocket. Ser-196 bears the Phosphoserine mark. Gly-200 lines the substrate pocket. An NADP(+)-binding site is contributed by 202-207 (LDTDMQ). Ser-214 carries the phosphoserine modification. Residue Asp-258 coordinates substrate.

The protein belongs to the sepiapterin reductase family. In terms of assembly, homodimer.

It localises to the cytoplasm. The enzyme catalyses L-erythro-7,8-dihydrobiopterin + NADP(+) = L-sepiapterin + NADPH + H(+). It carries out the reaction (6R)-L-erythro-5,6,7,8-tetrahydrobiopterin + 2 NADP(+) = 6-pyruvoyl-5,6,7,8-tetrahydropterin + 2 NADPH + 2 H(+). The catalysed reaction is (S)-benzoin + NADP(+) = benzil + NADPH + H(+). Catalyzes the final one or two reductions in tetra-hydrobiopterin biosynthesis to form 5,6,7,8-tetrahydrobiopterin. The enzyme also catalyzes the reduction of benzil to (S)-benzoin. This is Sepiapterin reductase (SPR) from Meriones unguiculatus (Mongolian jird).